The following is a 537-amino-acid chain: Berberine bridge enzyme-like 26 (537 aa).

The first 27 residues, 1–27 (MGISKPLPLFSILVLYFSLYTITPTSS), serve as a signal peptide directing secretion. An intrachain disulfide couples C38 to C102. N59 carries an N-linked (GlcNAc...) asparagine glycan. The region spanning 80 to 256 (SMPKPGFIFS…LAWKIKLVPV (177 aa)) is the FAD-binding PCMH-type domain. A cross-link (6-(S-cysteinyl)-8alpha-(pros-histidyl)-FAD (His-Cys)) is located at residues 117–181 (HDYEGLSYVS…KVHGFPAGLC (65 aa)). N306 carries N-linked (GlcNAc...) asparagine glycosylation.

It belongs to the oxygen-dependent FAD-linked oxidoreductase family. FAD serves as cofactor. In terms of processing, the FAD cofactor is bound via a bicovalent 6-S-cysteinyl, 8alpha-N1-histidyl FAD linkage.

The protein resides in the secreted. Its subcellular location is the cell wall. This Arabidopsis thaliana (Mouse-ear cress) protein is Berberine bridge enzyme-like 26.